The primary structure comprises 431 residues: Adenylosuccinate lyase (431 aa).

Residues 4–5 (RY), 67–69 (NHD), and 93–94 (TS) contribute to the N(6)-(1,2-dicarboxyethyl)-AMP site. Catalysis depends on His-141, which acts as the Proton donor/acceptor. Position 212 (Gln-212) interacts with N(6)-(1,2-dicarboxyethyl)-AMP. Ser-262 acts as the Proton donor/acceptor in catalysis. Residues Ser-263, 268–270 (KKN), and 307–311 (SVERY) contribute to the N(6)-(1,2-dicarboxyethyl)-AMP site.

It belongs to the lyase 1 family. Adenylosuccinate lyase subfamily. In terms of assembly, homotetramer. Residues from neighboring subunits contribute catalytic and substrate-binding residues to each active site.

The catalysed reaction is N(6)-(1,2-dicarboxyethyl)-AMP = fumarate + AMP. It catalyses the reaction (2S)-2-[5-amino-1-(5-phospho-beta-D-ribosyl)imidazole-4-carboxamido]succinate = 5-amino-1-(5-phospho-beta-D-ribosyl)imidazole-4-carboxamide + fumarate. It participates in purine metabolism; AMP biosynthesis via de novo pathway; AMP from IMP: step 2/2. It functions in the pathway purine metabolism; IMP biosynthesis via de novo pathway; 5-amino-1-(5-phospho-D-ribosyl)imidazole-4-carboxamide from 5-amino-1-(5-phospho-D-ribosyl)imidazole-4-carboxylate: step 2/2. Functionally, catalyzes two reactions in de novo purine nucleotide biosynthesis. Catalyzes the breakdown of 5-aminoimidazole- (N-succinylocarboxamide) ribotide (SAICAR or 2-[5-amino-1-(5-phospho-beta-D-ribosyl)imidazole-4-carboxamido]succinate) to 5-aminoimidazole-4-carboxamide ribotide (AICAR or 5-amino-1-(5-phospho-beta-D-ribosyl)imidazole-4-carboxamide) and fumarate, and of adenylosuccinate (ADS or N(6)-(1,2-dicarboxyethyl)-AMP) to adenosine monophosphate (AMP) and fumarate. The chain is Adenylosuccinate lyase (purB) from Thermotoga maritima (strain ATCC 43589 / DSM 3109 / JCM 10099 / NBRC 100826 / MSB8).